A 131-amino-acid chain; its full sequence is Ribosome-binding factor A (131 aa).

The protein belongs to the RbfA family. Monomer. Binds 30S ribosomal subunits, but not 50S ribosomal subunits or 70S ribosomes.

The protein resides in the cytoplasm. In terms of biological role, one of several proteins that assist in the late maturation steps of the functional core of the 30S ribosomal subunit. Associates with free 30S ribosomal subunits (but not with 30S subunits that are part of 70S ribosomes or polysomes). Required for efficient processing of 16S rRNA. May interact with the 5'-terminal helix region of 16S rRNA. This chain is Ribosome-binding factor A, found in Thermotoga petrophila (strain ATCC BAA-488 / DSM 13995 / JCM 10881 / RKU-1).